A 295-amino-acid chain; its full sequence is ATP synthase gamma chain (295 aa).

It belongs to the ATPase gamma chain family. F-type ATPases have 2 components, CF(1) - the catalytic core - and CF(0) - the membrane proton channel. CF(1) has five subunits: alpha(3), beta(3), gamma(1), delta(1), epsilon(1). CF(0) has three main subunits: a, b and c.

Its subcellular location is the cell inner membrane. Functionally, produces ATP from ADP in the presence of a proton gradient across the membrane. The gamma chain is believed to be important in regulating ATPase activity and the flow of protons through the CF(0) complex. In Sulfurovum sp. (strain NBC37-1), this protein is ATP synthase gamma chain.